Consider the following 123-residue polypeptide: Glycine cleavage system H protein (123 aa).

Residues 23 to 104 (HWLAGITDHA…PYDAWIFSFE (82 aa)) form the Lipoyl-binding domain. N6-lipoyllysine is present on K64.

The protein belongs to the GcvH family. The glycine cleavage system is composed of four proteins: P, T, L and H. Requires (R)-lipoate as cofactor.

Its function is as follows. The glycine cleavage system catalyzes the degradation of glycine. The H protein shuttles the methylamine group of glycine from the P protein to the T protein. In Methylobacillus flagellatus (strain ATCC 51484 / DSM 6875 / VKM B-1610 / KT), this protein is Glycine cleavage system H protein.